An 882-amino-acid polypeptide reads, in one-letter code: Alanine--tRNA ligase (882 aa).

4 residues coordinate Zn(2+): His564, His568, Cys666, and His670.

The protein belongs to the class-II aminoacyl-tRNA synthetase family. It depends on Zn(2+) as a cofactor.

It localises to the cytoplasm. The catalysed reaction is tRNA(Ala) + L-alanine + ATP = L-alanyl-tRNA(Ala) + AMP + diphosphate. Its function is as follows. Catalyzes the attachment of alanine to tRNA(Ala) in a two-step reaction: alanine is first activated by ATP to form Ala-AMP and then transferred to the acceptor end of tRNA(Ala). Also edits incorrectly charged Ser-tRNA(Ala) and Gly-tRNA(Ala) via its editing domain. This Rubrobacter xylanophilus (strain DSM 9941 / JCM 11954 / NBRC 16129 / PRD-1) protein is Alanine--tRNA ligase.